The chain runs to 268 residues: Thiazole synthase (268 aa).

The Schiff-base intermediate with DXP role is filled by Lys108. 1-deoxy-D-xylulose 5-phosphate contacts are provided by residues Gly169, 195–196, and 217–218; these read AG and NS. Residues 248–268 form a disordered region; that stretch reads RLKENPLASPSSPLDGVISNN. The segment covering 255–268 has biased composition (polar residues); the sequence is ASPSSPLDGVISNN.

The protein belongs to the ThiG family. Homotetramer. Forms heterodimers with either ThiH or ThiS.

It localises to the cytoplasm. It catalyses the reaction [ThiS sulfur-carrier protein]-C-terminal-Gly-aminoethanethioate + 2-iminoacetate + 1-deoxy-D-xylulose 5-phosphate = [ThiS sulfur-carrier protein]-C-terminal Gly-Gly + 2-[(2R,5Z)-2-carboxy-4-methylthiazol-5(2H)-ylidene]ethyl phosphate + 2 H2O + H(+). It participates in cofactor biosynthesis; thiamine diphosphate biosynthesis. Its function is as follows. Catalyzes the rearrangement of 1-deoxy-D-xylulose 5-phosphate (DXP) to produce the thiazole phosphate moiety of thiamine. Sulfur is provided by the thiocarboxylate moiety of the carrier protein ThiS. In vitro, sulfur can be provided by H(2)S. The sequence is that of Thiazole synthase from Prochlorococcus marinus (strain NATL2A).